Reading from the N-terminus, the 1058-residue chain is Protein translocase subunit SECA2, chloroplastic (1058 aa).

The N-terminal 58 residues, methionine 1 to serine 58, are a transit peptide targeting the chloroplast. Residue methionine 167–threonine 174 participates in ATP binding.

This sequence belongs to the SecA family. Part of a second Sec protein translocation apparatus. Interacts probably with SCY2.

It is found in the plastid. It localises to the chloroplast membrane. The catalysed reaction is ATP + H2O + chloroplast-proteinSide 1 = ADP + phosphate + chloroplast-proteinSide 2.. Functionally, involved in protein export. Probably interacts with other proteins to allow the postimport or conservative sorting pathway for inner membrane proteins in plastids. May have a central role in coupling the hydrolysis of ATP to the transfer of proteins across the membrane. This Arabidopsis thaliana (Mouse-ear cress) protein is Protein translocase subunit SECA2, chloroplastic.